The sequence spans 164 residues: Urocortin-3 (164 aa).

The signal sequence occupies residues 1–23 (MLMPTYFLLPLLLLLGGPRTSLS). Residues 24 to 121 (HKFYNTGPVF…PDKPKSDRGT (98 aa)) constitute a propeptide that is removed on maturation. Positions 58-120 (SFGHLPTQDP…YPDKPKSDRG (63 aa)) are disordered. Residues 110–120 (LYPDKPKSDRG) are compositionally biased toward basic and acidic residues. Ile160 is subject to Isoleucine amide.

This sequence belongs to the sauvagine/corticotropin-releasing factor/urotensin I family. In terms of assembly, binds with high affinity to CRF receptors 2-alpha and 2-beta. Expressed in some areas of the brain including the hypothalamus, amygdala, and brainstem, but is not evident in the cerebellum, pituitary, or cerebral cortex; it is also expressed peripherally in small intestine and skin.

The protein resides in the secreted. In terms of biological role, suppresses food intake, delays gastric emptying and decreases heat-induced edema. Might represent an endogenous ligand for maintaining homeostasis after stress. The sequence is that of Urocortin-3 (Ucn3) from Mus musculus (Mouse).